Reading from the N-terminus, the 347-residue chain is Transcription factor JunB (347 aa).

Residues K4, K33, and K36 each participate in a glycyl lysine isopeptide (Lys-Gly) (interchain with G-Cter in SUMO2) cross-link. The tract at residues 51–73 (KAPGARGPGPEGGGGGSYFSGQG) is disordered. Positions 56-68 (RGPGPEGGGGGSY) are enriched in gly residues. K81 participates in a covalent cross-link: Glycyl lysine isopeptide (Lys-Gly) (interchain with G-Cter in SUMO2). Residues T102 and T104 each carry the phosphothreonine modification. S117 carries the post-translational modification Phosphoserine. K141 participates in a covalent cross-link: Glycyl lysine isopeptide (Lys-Gly) (interchain with G-Cter in SUMO2). The segment covering 239-253 (FKEEPQTVPEARSRD) has biased composition (basic and acidic residues). A disordered region spans residues 239–260 (FKEEPQTVPEARSRDATPPVSP). N6-acetyllysine; alternate is present on K240. A Glycyl lysine isopeptide (Lys-Gly) (interchain with G-Cter in SUMO1); alternate cross-link involves residue K240. K240 participates in a covalent cross-link: Glycyl lysine isopeptide (Lys-Gly) (interchain with G-Cter in SUMO2); alternate. S251 carries the phosphoserine modification. T255 bears the Phosphothreonine mark. The residue at position 259 (S259) is a Phosphoserine. Positions 268 to 295 (RIKVERKRLRNRLAATKCRKRKLERIAR) are basic motif. The bZIP domain occupies 268–331 (RIKVERKRLR…AQLKQKVMTH (64 aa)). Residues 296–324 (LEDKVKTLKAENAGLSSTAGLLREQVAQL) form a leucine-zipper region. A Glycyl lysine isopeptide (Lys-Gly) (interchain with G-Cter in SUMO2) cross-link involves residue K343.

Belongs to the bZIP family. Jun subfamily. Binds DNA as a homodimer or as a heterodimer with another member of the Jun/Fos family. Component of an AP-1 transcription factor complex composed of JUN-FOS heterodimers composed of JUN-FOS heterodimers. As part of the AP-1 transcription factor complex, forms heterodimers with FOSB, thereby binding to the AP-1 consensus sequence and stimulating transcription. Interacts with ITCH (via its WW domains). Post-translationally, ubiquitinated by ITCH, leading to its degradation.

The protein resides in the nucleus. Functionally, transcription factor involved in regulating gene activity following the primary growth factor response. Binds to the DNA sequence 5'-TGA[GC]TCA-3'. Heterodimerizes with proteins of the FOS family to form an AP-1 transcription complex, thereby enhancing its DNA binding activity to an AP-1 consensus sequence and its transcriptional activity. This chain is Transcription factor JunB (JUNB), found in Homo sapiens (Human).